We begin with the raw amino-acid sequence, 256 residues long: Ubiquinone/menaquinone biosynthesis C-methyltransferase UbiE (256 aa).

S-adenosyl-L-methionine is bound by residues threonine 79, aspartate 100, and 128–129 (DA).

This sequence belongs to the class I-like SAM-binding methyltransferase superfamily. MenG/UbiE family.

The catalysed reaction is a 2-demethylmenaquinol + S-adenosyl-L-methionine = a menaquinol + S-adenosyl-L-homocysteine + H(+). It catalyses the reaction a 2-methoxy-6-(all-trans-polyprenyl)benzene-1,4-diol + S-adenosyl-L-methionine = a 5-methoxy-2-methyl-3-(all-trans-polyprenyl)benzene-1,4-diol + S-adenosyl-L-homocysteine + H(+). The protein operates within quinol/quinone metabolism; menaquinone biosynthesis; menaquinol from 1,4-dihydroxy-2-naphthoate: step 2/2. Its pathway is cofactor biosynthesis; ubiquinone biosynthesis. In terms of biological role, methyltransferase required for the conversion of demethylmenaquinol (DMKH2) to menaquinol (MKH2) and the conversion of 2-polyprenyl-6-methoxy-1,4-benzoquinol (DDMQH2) to 2-polyprenyl-3-methyl-6-methoxy-1,4-benzoquinol (DMQH2). The sequence is that of Ubiquinone/menaquinone biosynthesis C-methyltransferase UbiE from Pseudomonas paraeruginosa (strain DSM 24068 / PA7) (Pseudomonas aeruginosa (strain PA7)).